We begin with the raw amino-acid sequence, 332 residues long: Zinc finger protein CONSTANS-LIKE 13 (332 aa).

Zn(2+) contacts are provided by C13, C16, C36, H41, C56, C59, C79, and H84. A B box-type 1; atypical zinc finger spans residues 13–55 (CDYCDSSVALVYCKADSAKLCLACDKQVHVANQLFAKHFRSLL). Residues 56–96 (CDSCNESPSSLFCETERSVLCQNCDWQHHTASSSLHSRRPF) form a B box-type 2; atypical zinc finger. One can recognise a CCT domain in the interval 287 to 329 (RNSALSRYKEKKKSRRYEKHIRYESRKVRAESRTRIRGRFAKA).

Belongs to the CONSTANS family.

The protein localises to the nucleus. The sequence is that of Zinc finger protein CONSTANS-LIKE 13 (COL13) from Arabidopsis thaliana (Mouse-ear cress).